The following is a 192-amino-acid chain: dTDP-3-amino-3,6-dideoxy-alpha-D-galactopyranose 3-N-acetyltransferase (192 aa).

The protein belongs to the transferase hexapeptide repeat family.

The enzyme catalyses dTDP-3-amino-3,6-dideoxy-alpha-D-galactopyranose + acetyl-CoA = dTDP-3-acetamido-3,6-dideoxy-alpha-D-galactopyranose + CoA + H(+). In terms of biological role, catalyzes the transfer of an acetyl group to dTDP-D-Fucp3N to form dTDP-D-Fucp3NAc in the biosynthesis of dTDP-3-acetamido-3,6-dideoxy-alpha-D-galactose, a glycan chain of the S-layer. This Aneurinibacillus thermoaerophilus protein is dTDP-3-amino-3,6-dideoxy-alpha-D-galactopyranose 3-N-acetyltransferase (fdtC).